A 684-amino-acid polypeptide reads, in one-letter code: Pentatricopeptide repeat-containing protein At4g14850 (684 aa).

PPR repeat units lie at residues 5 to 39 (SADA…LDSP), 41 to 71 (PPFL…TPAR), 72 to 106 (NVVS…GVVP), 107 to 141 (NDFT…GRIL), 142 to 172 (DVFV…IPER), 173 to 207 (NLET…DGHP), 208 to 242 (NSIT…GFDT), 243 to 277 (DVSV…NAVS), 278 to 308 (WCSL…IVET), 309 to 343 (SDFM…CVER), 344 to 374 (TIFV…MPEK), 375 to 409 (NLVT…GCGP), 412 to 442 (NYMT…MRST), and 448 to 478 (GAEH…MPIQ). The type E motif; degenerate stretch occupies residues 483 to 558 (VWGALQNACR…GAGYSWITVK (76 aa)). Positions 559–589 (NQVHAFQAKDRSHILNKEIQTTLAKLRNEME) are type E(+) motif; degenerate. The interval 590–684 (AAGYKPDLKL…DGICSCKDYW (95 aa)) is type DYW motif.

It belongs to the PPR family. PCMP-H subfamily.

Functionally, acts as a regulatory factor of isoprenoid biosynthesis. Could bind RNA. The protein is Pentatricopeptide repeat-containing protein At4g14850 (LOI1) of Arabidopsis thaliana (Mouse-ear cress).